The primary structure comprises 644 residues: Exoribonuclease 2 (644 aa).

One can recognise an RNB domain in the interval 189–516 (REDLTALDFV…NHRLLKAVIK (328 aa)). The S1 motif domain maps to 561–643 (DTRFAAEIVD…ETRSIIARPV (83 aa)).

The protein belongs to the RNR ribonuclease family. RNase II subfamily.

It localises to the cytoplasm. It catalyses the reaction Exonucleolytic cleavage in the 3'- to 5'-direction to yield nucleoside 5'-phosphates.. In terms of biological role, involved in mRNA degradation. Hydrolyzes single-stranded polyribonucleotides processively in the 3' to 5' direction. The polypeptide is Exoribonuclease 2 (Escherichia coli (strain SMS-3-5 / SECEC)).